The following is a 193-amino-acid chain: Peptidyl-tRNA hydrolase (193 aa).

Histidine 17 contacts tRNA. Histidine 22 acts as the Proton acceptor in catalysis. TRNA-binding residues include phenylalanine 68, asparagine 70, and asparagine 116.

It belongs to the PTH family. In terms of assembly, monomer.

The protein resides in the cytoplasm. It carries out the reaction an N-acyl-L-alpha-aminoacyl-tRNA + H2O = an N-acyl-L-amino acid + a tRNA + H(+). Hydrolyzes ribosome-free peptidyl-tRNAs (with 1 or more amino acids incorporated), which drop off the ribosome during protein synthesis, or as a result of ribosome stalling. Its function is as follows. Catalyzes the release of premature peptidyl moieties from peptidyl-tRNA molecules trapped in stalled 50S ribosomal subunits, and thus maintains levels of free tRNAs and 50S ribosomes. The sequence is that of Peptidyl-tRNA hydrolase from Xanthomonas campestris pv. campestris (strain 8004).